A 172-amino-acid polypeptide reads, in one-letter code: Single-stranded DNA-binding protein A (172 aa).

One can recognise an SSB domain in the interval 1–104 (MLNRVVLVGR…VQAESVQFLE (104 aa)). Tyr-82 is modified (phosphotyrosine). The interval 103–172 (LEPKNGGGSG…IDISDDDLPF (70 aa)) is disordered. Gly residues predominate over residues 107–131 (NGGGSGSGGYNEGNSGGGQYFGGGQ). The segment covering 132–149 (NDNPFGGNQNNQRRNQGN) has biased composition (low complexity). The Important for interaction with partner proteins motif lies at 167–172 (DDDLPF).

In terms of assembly, homotetramer. Interacts with proteins involved in DNA metabolism such as PriA, RecQ, RecG, RecS, DnaE, RarA, RecJ, RecO, SbcC, RecD2 (formerly YrrC), XseA and Ung. Interacts with RecQ via its 10 C-terminal residues. Interacts with RecD2. Post-translationally, phosphorylated by YwqD, which increases ssDNA affinity; dephosphorylated by YwqE.

It is found in the cytoplasm. It localises to the nucleoid. Its function is as follows. Plays an important role in DNA replication, recombination and repair. Binds to single-stranded (ss)DNA and to an array of partner proteins to recruit them to their sites of action during DNA metabolism. Associates with oriC, this requires DnaA. SsbA binding to ssDNA prevents DnaB and DnaD individually from binding to DNA. Has a 20-fold higher affinity for ssDNA than SsbB; SsbA and DprA activate the homologous DNA strand exchange function of RecA-ATP. Enhances the activity of 3'-5' DNA helicase RecQ. This chain is Single-stranded DNA-binding protein A (ssbA), found in Bacillus subtilis (strain 168).